The following is a 97-amino-acid chain: Citrate lyase acyl carrier protein (97 aa).

Serine 14 is subject to O-(phosphoribosyl dephospho-coenzyme A)serine.

It belongs to the CitD family. In terms of assembly, oligomer with a subunit composition of (alpha,beta,gamma)6.

The protein resides in the cytoplasm. In terms of biological role, covalent carrier of the coenzyme of citrate lyase. This is Citrate lyase acyl carrier protein from Klebsiella pneumoniae subsp. pneumoniae (strain ATCC 700721 / MGH 78578).